We begin with the raw amino-acid sequence, 452 residues long: Flavanone 7-O-glucoside 2''-O-beta-L-rhamnosyltransferase (452 aa).

H21 acts as the Proton acceptor in catalysis. H21 is a binding site for an anthocyanidin. The Charge relay role is filled by D121. Residues 136 to 156 form a helical membrane-spanning segment; the sequence is IAAILFLPLSAVACSFLLHNI. UDP-beta-L-rhamnose-binding residues include S268, V330, H347, G351, S352, and E355. The stretch at 407–436 forms a coiled coil; sequence KHVVLQEEAKQIRRKANEISESMKKIGDAE.

The protein belongs to the UDP-glycosyltransferase family. As to quaternary structure, monomer. In terms of tissue distribution, expressed in young fruits and leaves.

It is found in the membrane. The enzyme catalyses flavanone 7-O-beta-D-glucoside + UDP-beta-L-rhamnose = flavanone 7-O-[alpha-L-rhamnosyl-(1-&gt;2)-beta-D-glucoside] + UDP + H(+). Involved in the production of the bitter neohesperidosides in citrus. Shows a strict specificity for UDP-rhamnose as donor. The chain is Flavanone 7-O-glucoside 2''-O-beta-L-rhamnosyltransferase (C12RT1) from Citrus maxima (Pomelo).